Here is a 429-residue protein sequence, read N- to C-terminus: Adenylosuccinate synthetase (429 aa).

GTP-binding positions include 12-18 and 40-42; these read GDEGKGK and GHT. Residue D13 is the Proton acceptor of the active site. 2 residues coordinate Mg(2+): D13 and G40. IMP-binding positions include 13-16, 38-41, T129, R143, Q223, T238, and R302; these read DEGK and NAGH. Residue H41 is the Proton donor of the active site. 298-304 lines the substrate pocket; that stretch reads VVTGRKR. Residues R304, 330–332, and 412–414 contribute to the GTP site; these read KLD and STS.

The protein belongs to the adenylosuccinate synthetase family. In terms of assembly, homodimer. The cofactor is Mg(2+).

Its subcellular location is the cytoplasm. It carries out the reaction IMP + L-aspartate + GTP = N(6)-(1,2-dicarboxyethyl)-AMP + GDP + phosphate + 2 H(+). It functions in the pathway purine metabolism; AMP biosynthesis via de novo pathway; AMP from IMP: step 1/2. In terms of biological role, plays an important role in the de novo pathway of purine nucleotide biosynthesis. Catalyzes the first committed step in the biosynthesis of AMP from IMP. In Brucella suis (strain ATCC 23445 / NCTC 10510), this protein is Adenylosuccinate synthetase.